A 330-amino-acid polypeptide reads, in one-letter code: Methionyl-tRNA formyltransferase (330 aa).

S116 to P119 is a (6S)-5,6,7,8-tetrahydrofolate binding site.

The protein belongs to the Fmt family.

It catalyses the reaction L-methionyl-tRNA(fMet) + (6R)-10-formyltetrahydrofolate = N-formyl-L-methionyl-tRNA(fMet) + (6S)-5,6,7,8-tetrahydrofolate + H(+). Its function is as follows. Attaches a formyl group to the free amino group of methionyl-tRNA(fMet). The formyl group appears to play a dual role in the initiator identity of N-formylmethionyl-tRNA by promoting its recognition by IF2 and preventing the misappropriation of this tRNA by the elongation apparatus. In Nitratidesulfovibrio vulgaris (strain ATCC 29579 / DSM 644 / CCUG 34227 / NCIMB 8303 / VKM B-1760 / Hildenborough) (Desulfovibrio vulgaris), this protein is Methionyl-tRNA formyltransferase.